The sequence spans 490 residues: Betaine aldehyde dehydrogenase (490 aa).

Positions 26, 27, and 93 each coordinate K(+). 150–152 (GAW) lines the NAD(+) pocket. The Charge relay system role is filled by lysine 162. 176 to 179 (KPSE) provides a ligand contact to NAD(+). Position 180 (valine 180) interacts with K(+). 230 to 233 (GVAS) serves as a coordination point for NAD(+). Leucine 246 serves as a coordination point for K(+). Glutamate 252 functions as the Proton acceptor in the catalytic mechanism. Residues glycine 254, cysteine 286, and glutamate 387 each coordinate NAD(+). Cysteine 286 (nucleophile) is an active-site residue. Cysteine 286 carries the post-translational modification Cysteine sulfenic acid (-SOH). Residues lysine 457 and glycine 460 each contribute to the K(+) site. Glutamate 464 functions as the Charge relay system in the catalytic mechanism.

Belongs to the aldehyde dehydrogenase family. Dimer of dimers. K(+) is required as a cofactor.

The catalysed reaction is betaine aldehyde + NAD(+) + H2O = glycine betaine + NADH + 2 H(+). Its pathway is amine and polyamine biosynthesis; betaine biosynthesis via choline pathway; betaine from betaine aldehyde: step 1/1. Functionally, involved in the biosynthesis of the osmoprotectant glycine betaine. Catalyzes the irreversible oxidation of betaine aldehyde to the corresponding acid. This chain is Betaine aldehyde dehydrogenase, found in Shigella flexneri serotype 5b (strain 8401).